A 59-amino-acid chain; its full sequence is uncharacterized protein (59 aa).

Positions 27-59 are disordered; that stretch reads SCFQNRPPEPASFQNLRPEPASLQNLRTEPTSF. The span at 48–59 shows a compositional bias: polar residues; sequence SLQNLRTEPTSF.

This is an uncharacterized protein from Homo sapiens (Human).